The sequence spans 330 residues: Endo-1,4-beta-xylanase (330 aa).

Positions 2 to 330 constitute a GH10 domain; sequence CSSIPSLREV…KPAFWRVVNI (329 aa). The active-site Proton donor is E133. Residue E240 is the Nucleophile of the active site.

The protein belongs to the glycosyl hydrolase 10 (cellulase F) family. Cytoplasmic xylanase subfamily.

The protein resides in the cytoplasm. The enzyme catalyses Endohydrolysis of (1-&gt;4)-beta-D-xylosidic linkages in xylans.. It participates in glycan degradation; xylan degradation. The protein is Endo-1,4-beta-xylanase (xynA) of Geobacillus stearothermophilus (Bacillus stearothermophilus).